A 165-amino-acid chain; its full sequence is Crossover junction endodeoxyribonuclease RuvC (165 aa).

Catalysis depends on residues aspartate 8, glutamate 66, and aspartate 138. 3 residues coordinate Mg(2+): aspartate 8, glutamate 66, and aspartate 138.

This sequence belongs to the RuvC family. In terms of assembly, homodimer which binds Holliday junction (HJ) DNA. The HJ becomes 2-fold symmetrical on binding to RuvC with unstacked arms; it has a different conformation from HJ DNA in complex with RuvA. In the full resolvosome a probable DNA-RuvA(4)-RuvB(12)-RuvC(2) complex forms which resolves the HJ. It depends on Mg(2+) as a cofactor.

Its subcellular location is the cytoplasm. It carries out the reaction Endonucleolytic cleavage at a junction such as a reciprocal single-stranded crossover between two homologous DNA duplexes (Holliday junction).. The RuvA-RuvB-RuvC complex processes Holliday junction (HJ) DNA during genetic recombination and DNA repair. Endonuclease that resolves HJ intermediates. Cleaves cruciform DNA by making single-stranded nicks across the HJ at symmetrical positions within the homologous arms, yielding a 5'-phosphate and a 3'-hydroxyl group; requires a central core of homology in the junction. The consensus cleavage sequence is 5'-(A/T)TT(C/G)-3'. Cleavage occurs on the 3'-side of the TT dinucleotide at the point of strand exchange. HJ branch migration catalyzed by RuvA-RuvB allows RuvC to scan DNA until it finds its consensus sequence, where it cleaves and resolves the cruciform DNA. This chain is Crossover junction endodeoxyribonuclease RuvC, found in Methylococcus capsulatus (strain ATCC 33009 / NCIMB 11132 / Bath).